A 238-amino-acid chain; its full sequence is Purine nucleoside phosphorylase DeoD-type (238 aa).

His5 contacts a purine D-ribonucleoside. Residues Gly21, Arg25, Arg44, and 88-91 (RIGS) contribute to the phosphate site. Residues 180 to 182 (EME) and 204 to 205 (SD) contribute to the a purine D-ribonucleoside site. The active-site Proton donor is the Asp205.

This sequence belongs to the PNP/UDP phosphorylase family. Homohexamer; trimer of homodimers.

It carries out the reaction a purine D-ribonucleoside + phosphate = a purine nucleobase + alpha-D-ribose 1-phosphate. It catalyses the reaction a purine 2'-deoxy-D-ribonucleoside + phosphate = a purine nucleobase + 2-deoxy-alpha-D-ribose 1-phosphate. In terms of biological role, catalyzes the reversible phosphorolytic breakdown of the N-glycosidic bond in the beta-(deoxy)ribonucleoside molecules, with the formation of the corresponding free purine bases and pentose-1-phosphate. The polypeptide is Purine nucleoside phosphorylase DeoD-type (Xenorhabdus nematophila (strain ATCC 19061 / DSM 3370 / CCUG 14189 / LMG 1036 / NCIMB 9965 / AN6)).